Reading from the N-terminus, the 164-residue chain is MNKIIEKMIYESRWLLFPVYIGLSFGFILLTLKFFHEIIQFLPKIFDMPESDLILIVLSMIDIALVGGLLVMVMFSGYENFILKMSDDCNQKRLNWMGKMDVNSIKNKVASSIVAISSVHLLRIFMEADRTRDNKIMWCVIIHLAFVLSAFGMAYIDKMSKTKS.

3 helical membrane-spanning segments follow: residues 15–35, 53–73, and 136–156; these read LLFPVYIGLSFGFILLTLKFF, LILIVLSMIDIALVGGLLVMV, and IMWCVIIHLAFVLSAFGMAYI.

The protein belongs to the UPF0114 family.

It is found in the cell membrane. The polypeptide is UPF0114 protein BCI_0033 (Baumannia cicadellinicola subsp. Homalodisca coagulata).